The following is a 448-amino-acid chain: Exodeoxyribonuclease 7 large subunit (448 aa).

Belongs to the XseA family. In terms of assembly, heterooligomer composed of large and small subunits.

It localises to the cytoplasm. The enzyme catalyses Exonucleolytic cleavage in either 5'- to 3'- or 3'- to 5'-direction to yield nucleoside 5'-phosphates.. Functionally, bidirectionally degrades single-stranded DNA into large acid-insoluble oligonucleotides, which are then degraded further into small acid-soluble oligonucleotides. This Geobacillus kaustophilus (strain HTA426) protein is Exodeoxyribonuclease 7 large subunit.